Consider the following 84-residue polypeptide: Small ribosomal subunit protein bS16 (84 aa).

Belongs to the bacterial ribosomal protein bS16 family.

The sequence is that of Small ribosomal subunit protein bS16 from Burkholderia ambifaria (strain MC40-6).